The sequence spans 141 residues: VLSAADKGNVKAAWGKVGGHAAEYGAEALERMFLSFPTTKTYFPHFDLSQGSAQVKGHGAKVAAALTKAVEHLDDLPGALSELSDLHAHKLRVDPVNFKLLSHSLLVTLASHLPSDFTPAVHASLDKFLANVSTVLTSKYR.

The Globin domain maps to V1–R141. H58 is an O2 binding site. Position 87 (H87) interacts with heme b.

The protein belongs to the globin family. Heterotetramer of two alpha chains and two beta chains. Red blood cells.

Involved in oxygen transport from the lung to the various peripheral tissues. This Bos mutus grunniens (Wild yak) protein is Hemoglobin subunit alpha-1.